We begin with the raw amino-acid sequence, 150 residues long: SsrA-binding protein (150 aa).

This sequence belongs to the SmpB family.

It localises to the cytoplasm. Required for rescue of stalled ribosomes mediated by trans-translation. Binds to transfer-messenger RNA (tmRNA), required for stable association of tmRNA with ribosomes. tmRNA and SmpB together mimic tRNA shape, replacing the anticodon stem-loop with SmpB. tmRNA is encoded by the ssrA gene; the 2 termini fold to resemble tRNA(Ala) and it encodes a 'tag peptide', a short internal open reading frame. During trans-translation Ala-aminoacylated tmRNA acts like a tRNA, entering the A-site of stalled ribosomes, displacing the stalled mRNA. The ribosome then switches to translate the ORF on the tmRNA; the nascent peptide is terminated with the 'tag peptide' encoded by the tmRNA and targeted for degradation. The ribosome is freed to recommence translation, which seems to be the essential function of trans-translation. This Campylobacter curvus (strain 525.92) protein is SsrA-binding protein.